The sequence spans 87 residues: Tan_10cys (87 aa).

A signal peptide spans 1–21; sequence MNLKVLFLLAMVLVTLCLGED. Positions 22–27 are excised as a propeptide; the sequence is RVTDRR.

This sequence belongs to the teretoxin C (TC) superfamily. Contains 5 disulfide bonds. In terms of tissue distribution, expressed by the venom duct.

The protein localises to the secreted. This Terebra anilis (Auger snail) protein is Tan_10cys.